The chain runs to 424 residues: MKPQWQQYIQIINQVVKPALGCTEPIAAAYAAAVARTLLPVEPESIAVQVSDNLYKNSMGVYVPGTGKIGLAIAAAAGALAGDAEAGLEVLANVTPEQVTKAQTLIDAGKVKVERTETDEFIYCCVSLTAGEQEAMVKICGGHTLIAEKRLNGELVFTADNAQAKATGSICDGIDINIESIYRFAQEVPFEEIQFILKASELNSKLSDEGMSKPYGLEVGRTMKNGIAAGIIGEDLLNKIVMLTAAASDARMGGANLPAMSNLGSGNQGIAATIPVVITAQCYKVSEEKLARALIMSHLGAIYIKSHYPPLSAFCGNTVTSAAASMAMVYLAGGSFEQSCYAIQNVISDSSGMVCDGAKASCAMKVSTSSSAAVRSFLMALSSQNVSGQGIIAKDVEKTIKNIGKMVLNGMSSTDVTIINIMSE.

It belongs to the UPF0597 family.

The protein is UPF0597 protein Shewmr7_2876 of Shewanella sp. (strain MR-7).